The primary structure comprises 1119 residues: DNA-directed RNA polymerase D subunit 2b (1119 aa).

Asp-732 serves as a coordination point for Mg(2+). The Zn(2+) site is built by Cys-1055, Cys-1058, Cys-1080, and Cys-1083. The C4-type zinc-finger motif lies at 1055–1083 (CRKCKTYANVIERTPSSGRKIRGPYCRVC).

Belongs to the RNA polymerase beta chain family. In terms of assembly, component of the RNA polymerase IVa and IVb (Pol IV) complexes.

The protein resides in the nucleus. The enzyme catalyses RNA(n) + a ribonucleoside 5'-triphosphate = RNA(n+1) + diphosphate. DNA-dependent RNA polymerase catalyzes the transcription of DNA into RNA using the four ribonucleoside triphosphates as substrates. Second largest component of RNA polymerase IVa and IVb which mediate short-interfering RNAs (siRNA) accumulation and subsequent RNA-directed DNA methylation-dependent (RdDM) silencing of endogenous repeated sequences, including transposable largest subunit. Also required for full erasure of methylation elements. Required for intercellular RNA interference (RNAi) leading to systemic post-transcriptional gene silencing. The sequence is that of DNA-directed RNA polymerase D subunit 2b (NRPD2b) from Arabidopsis thaliana (Mouse-ear cress).